The following is an 89-amino-acid chain: Small ribosomal subunit protein uS15 (89 aa).

Belongs to the universal ribosomal protein uS15 family. As to quaternary structure, part of the 30S ribosomal subunit. Forms a bridge to the 50S subunit in the 70S ribosome, contacting the 23S rRNA.

Its function is as follows. One of the primary rRNA binding proteins, it binds directly to 16S rRNA where it helps nucleate assembly of the platform of the 30S subunit by binding and bridging several RNA helices of the 16S rRNA. In terms of biological role, forms an intersubunit bridge (bridge B4) with the 23S rRNA of the 50S subunit in the ribosome. In Chlorobium chlorochromatii (strain CaD3), this protein is Small ribosomal subunit protein uS15.